The sequence spans 23 residues: Alpha-conotoxin-like RgIB (23 aa).

Cystine bridges form between cysteine 5/cysteine 11 and cysteine 6/cysteine 19. The interval 7–9 is lacks the Ser-Xaa-Pro motif that is crucial for potent interaction with nAChR; sequence KNP.

As to expression, expressed by venom duct.

It is found in the secreted. Alpha-conotoxins act on postsynaptic membranes, they bind to the nicotinic acetylcholine receptors (nAChR) and thus inhibit them. Is a specific blocker of the alpha-3-beta-4/CHRNA3-CHRNB4 image nAChR and may also block alpha-3-beta-4-alpha-5 (CHRNA3-CHRNB4-CHRNA5) channels. Has possibly a distinct nAChR binding mode from other alpha-conotoxins, due to a different three residue motif (lacks the Ser-Xaa-Pro motif). In vivo, causes hyperactivity and behavioral disorders in mice following intracranial injection. The sequence is that of Alpha-conotoxin-like RgIB from Conus regius (Crown cone).